A 397-amino-acid chain; its full sequence is Succinate--CoA ligase [ADP-forming] subunit beta (397 aa).

The ATP-grasp domain occupies lysine 9–glutamate 254. ATP contacts are provided by residues lysine 46, glycine 53 to glycine 55, glutamate 109, alanine 112, and glutamate 117. Mg(2+)-binding residues include asparagine 209 and aspartate 223. Substrate contacts are provided by residues asparagine 274 and glycine 331–methionine 333.

This sequence belongs to the succinate/malate CoA ligase beta subunit family. Heterotetramer of two alpha and two beta subunits. It depends on Mg(2+) as a cofactor.

It catalyses the reaction succinate + ATP + CoA = succinyl-CoA + ADP + phosphate. It carries out the reaction GTP + succinate + CoA = succinyl-CoA + GDP + phosphate. It functions in the pathway carbohydrate metabolism; tricarboxylic acid cycle; succinate from succinyl-CoA (ligase route): step 1/1. In terms of biological role, succinyl-CoA synthetase functions in the citric acid cycle (TCA), coupling the hydrolysis of succinyl-CoA to the synthesis of either ATP or GTP and thus represents the only step of substrate-level phosphorylation in the TCA. The beta subunit provides nucleotide specificity of the enzyme and binds the substrate succinate, while the binding sites for coenzyme A and phosphate are found in the alpha subunit. This Chelativorans sp. (strain BNC1) protein is Succinate--CoA ligase [ADP-forming] subunit beta.